Consider the following 101-residue polypeptide: Small ribosomal subunit protein uS14 (101 aa).

It belongs to the universal ribosomal protein uS14 family. In terms of assembly, part of the 30S ribosomal subunit. Contacts proteins S3 and S10.

Its function is as follows. Binds 16S rRNA, required for the assembly of 30S particles and may also be responsible for determining the conformation of the 16S rRNA at the A site. This is Small ribosomal subunit protein uS14 from Cupriavidus metallidurans (strain ATCC 43123 / DSM 2839 / NBRC 102507 / CH34) (Ralstonia metallidurans).